Reading from the N-terminus, the 599-residue chain is Elongation factor 4 (599 aa).

One can recognise a tr-type G domain in the interval 4–186; that stretch reads SKIRNFSIIA…SIVEKVPAPK (183 aa). Residues 16–21 and 133–136 each bind GTP; these read DHGKST and NKVD.

Belongs to the TRAFAC class translation factor GTPase superfamily. Classic translation factor GTPase family. LepA subfamily.

Its subcellular location is the cell inner membrane. It catalyses the reaction GTP + H2O = GDP + phosphate + H(+). In terms of biological role, required for accurate and efficient protein synthesis under certain stress conditions. May act as a fidelity factor of the translation reaction, by catalyzing a one-codon backward translocation of tRNAs on improperly translocated ribosomes. Back-translocation proceeds from a post-translocation (POST) complex to a pre-translocation (PRE) complex, thus giving elongation factor G a second chance to translocate the tRNAs correctly. Binds to ribosomes in a GTP-dependent manner. The polypeptide is Elongation factor 4 (Syntrophotalea carbinolica (strain DSM 2380 / NBRC 103641 / GraBd1) (Pelobacter carbinolicus)).